The chain runs to 235 residues: Phosphoribosylaminoimidazole-succinocarboxamide synthase (235 aa).

This sequence belongs to the SAICAR synthetase family.

The enzyme catalyses 5-amino-1-(5-phospho-D-ribosyl)imidazole-4-carboxylate + L-aspartate + ATP = (2S)-2-[5-amino-1-(5-phospho-beta-D-ribosyl)imidazole-4-carboxamido]succinate + ADP + phosphate + 2 H(+). It participates in purine metabolism; IMP biosynthesis via de novo pathway; 5-amino-1-(5-phospho-D-ribosyl)imidazole-4-carboxamide from 5-amino-1-(5-phospho-D-ribosyl)imidazole-4-carboxylate: step 1/2. In Streptococcus pneumoniae serotype 4 (strain ATCC BAA-334 / TIGR4), this protein is Phosphoribosylaminoimidazole-succinocarboxamide synthase (purC).